The primary structure comprises 317 residues: Porphobilinogen deaminase (317 aa).

Cysteine 245 is modified (S-(dipyrrolylmethanemethyl)cysteine).

This sequence belongs to the HMBS family. As to quaternary structure, monomer. Dipyrromethane is required as a cofactor.

It carries out the reaction 4 porphobilinogen + H2O = hydroxymethylbilane + 4 NH4(+). Its pathway is porphyrin-containing compound metabolism; protoporphyrin-IX biosynthesis; coproporphyrinogen-III from 5-aminolevulinate: step 2/4. It functions in the pathway porphyrin-containing compound metabolism; chlorophyll biosynthesis. Its function is as follows. Tetrapolymerization of the monopyrrole PBG into the hydroxymethylbilane pre-uroporphyrinogen in several discrete steps. The polypeptide is Porphobilinogen deaminase (Prochlorococcus marinus (strain MIT 9313)).